Reading from the N-terminus, the 329-residue chain is Olfactory receptor 10J3 (329 aa).

Residues M1–L26 are Extracellular-facing. N-linked (GlcNAc...) asparagine glycosylation occurs at N5. The chain crosses the membrane as a helical span at residues V27–M47. Residues T48–H55 are Cytoplasmic-facing. The helical transmembrane segment at L56–V76 threads the bilayer. Residues A77–T100 are Extracellular-facing. Cysteines 98 and 190 form a disulfide. The chain crosses the membrane as a helical span at residues Q101–Y121. The Cytoplasmic portion of the chain corresponds to D122–R140. The helical transmembrane segment at A141–V161 threads the bilayer. The Extracellular segment spans residues T162–I198. A helical membrane pass occupies residues I199–S218. The Cytoplasmic segment spans residues Y219–A238. Residues F239–I259 traverse the membrane as a helical segment. Residues Y260–D272 lie on the Extracellular side of the membrane. A helical membrane pass occupies residues R273–E293. At E294 to Y329 the chain is on the cytoplasmic side.

This sequence belongs to the G-protein coupled receptor 1 family.

Its subcellular location is the cell membrane. Its function is as follows. Odorant receptor. This Homo sapiens (Human) protein is Olfactory receptor 10J3 (OR10J3).